A 294-amino-acid chain; its full sequence is tRNA pseudouridine synthase B (294 aa).

Aspartate 39 functions as the Nucleophile in the catalytic mechanism.

The protein belongs to the pseudouridine synthase TruB family. Type 1 subfamily.

The enzyme catalyses uridine(55) in tRNA = pseudouridine(55) in tRNA. In terms of biological role, responsible for synthesis of pseudouridine from uracil-55 in the psi GC loop of transfer RNAs. The protein is tRNA pseudouridine synthase B of Streptococcus pyogenes serotype M5 (strain Manfredo).